The primary structure comprises 499 residues: 2,3-bisphosphoglycerate-independent phosphoglycerate mutase (499 aa).

Mn(2+) is bound by residues aspartate 10 and serine 60. Residue serine 60 is the Phosphoserine intermediate of the active site. Substrate is bound by residues histidine 121, 151 to 152 (RD), arginine 182, arginine 188, 253 to 256 (RPDR), and lysine 326. Residues aspartate 391, histidine 395, aspartate 434, histidine 435, and histidine 452 each coordinate Mn(2+).

Belongs to the BPG-independent phosphoglycerate mutase family. In terms of assembly, monomer. Mn(2+) is required as a cofactor.

The catalysed reaction is (2R)-2-phosphoglycerate = (2R)-3-phosphoglycerate. The protein operates within carbohydrate degradation; glycolysis; pyruvate from D-glyceraldehyde 3-phosphate: step 3/5. Functionally, catalyzes the interconversion of 2-phosphoglycerate and 3-phosphoglycerate. The chain is 2,3-bisphosphoglycerate-independent phosphoglycerate mutase from Metamycoplasma hominis (strain ATCC 23114 / DSM 25592 / NBRC 14850 / NCTC 10111 / PG21) (Mycoplasma hominis).